Consider the following 353-residue polypeptide: Serine proteinase inhibitor 1 (353 aa).

It belongs to the serpin family. Poxviruses subfamily.

Its subcellular location is the host cytoplasm. Plays a role in mediating viral host range. May act to inhibit a caspase independent form of apoptosis to allow efficient virus replication in infected cells. The protein is Serine proteinase inhibitor 1 (OPG208) of Vaccinia virus (strain Copenhagen) (VACV).